Consider the following 232-residue polypeptide: UPF0502 protein Aave_3438 (232 aa).

Belongs to the UPF0502 family.

The polypeptide is UPF0502 protein Aave_3438 (Paracidovorax citrulli (strain AAC00-1) (Acidovorax citrulli)).